We begin with the raw amino-acid sequence, 371 residues long: uncharacterized protein (371 aa).

The helical transmembrane segment at 17 to 33 threads the bilayer; the sequence is FLLFSVVLIIVMTTLVF.

To S.pombe SpBC4C3.08 and SpBC4C3.09.

The protein localises to the membrane. This is an uncharacterized protein from Schizosaccharomyces pombe (strain 972 / ATCC 24843) (Fission yeast).